A 508-amino-acid polypeptide reads, in one-letter code: Glycerol kinase (508 aa).

Residue threonine 14 participates in ADP binding. The ATP site is built by threonine 14, threonine 15, and serine 16. Threonine 14 is a binding site for sn-glycerol 3-phosphate. Arginine 18 contacts ADP. Arginine 84, glutamate 85, tyrosine 134, and aspartate 247 together coordinate sn-glycerol 3-phosphate. 5 residues coordinate glycerol: arginine 84, glutamate 85, tyrosine 134, aspartate 247, and glutamine 248. Residues threonine 269 and glycine 313 each coordinate ADP. Threonine 269, glycine 313, glutamine 317, and glycine 416 together coordinate ATP. Glycine 416 lines the ADP pocket.

It belongs to the FGGY kinase family.

It catalyses the reaction glycerol + ATP = sn-glycerol 3-phosphate + ADP + H(+). It functions in the pathway polyol metabolism; glycerol degradation via glycerol kinase pathway; sn-glycerol 3-phosphate from glycerol: step 1/1. Its activity is regulated as follows. Inhibited by fructose 1,6-bisphosphate (FBP). Key enzyme in the regulation of glycerol uptake and metabolism. Catalyzes the phosphorylation of glycerol to yield sn-glycerol 3-phosphate. The polypeptide is Glycerol kinase (Mycoplasmoides gallisepticum (strain R(low / passage 15 / clone 2)) (Mycoplasma gallisepticum)).